Reading from the N-terminus, the 426-residue chain is Glucose-1-phosphate adenylyltransferase (426 aa).

Alpha-D-glucose 1-phosphate-binding positions include tyrosine 100, glycine 165, 180 to 181, and serine 191; that span reads EK.

It belongs to the bacterial/plant glucose-1-phosphate adenylyltransferase family. Homotetramer.

It catalyses the reaction alpha-D-glucose 1-phosphate + ATP + H(+) = ADP-alpha-D-glucose + diphosphate. The protein operates within glycan biosynthesis; glycogen biosynthesis. In terms of biological role, involved in the biosynthesis of ADP-glucose, a building block required for the elongation reactions to produce glycogen. Catalyzes the reaction between ATP and alpha-D-glucose 1-phosphate (G1P) to produce pyrophosphate and ADP-Glc. This is Glucose-1-phosphate adenylyltransferase from Acetivibrio thermocellus (strain ATCC 27405 / DSM 1237 / JCM 9322 / NBRC 103400 / NCIMB 10682 / NRRL B-4536 / VPI 7372) (Clostridium thermocellum).